The sequence spans 523 residues: Carboxypeptidase Y (523 aa).

Positions Met1 to Gly20 are cleaved as a signal peptide. Residues Leu21–Val107 constitute a propeptide that is removed on maturation. 5 disulfides stabilise this stretch: Cys162–Cys401, Cys296–Cys310, Cys320–Cys343, Cys327–Cys336, and Cys365–Cys371. Residue Asn193 is glycosylated (N-linked (GlcNAc...) asparagine). Ser249 is a catalytic residue. Asn271 carries N-linked (GlcNAc...) asparagine glycosylation. Asp441 is an active-site residue. N-linked (GlcNAc...) asparagine glycans are attached at residues Asn484 and Asn487. Residue His498 is part of the active site.

It belongs to the peptidase S10 family.

It is found in the vacuole. The enzyme catalyses Release of a C-terminal amino acid with broad specificity.. In terms of biological role, involved in degradation of small peptides. In Komagataella phaffii (strain GS115 / ATCC 20864) (Yeast), this protein is Carboxypeptidase Y (PRC1).